We begin with the raw amino-acid sequence, 338 residues long: Ribosomal RNA small subunit methyltransferase C (338 aa).

It belongs to the methyltransferase superfamily. RsmC family. Monomer.

The protein localises to the cytoplasm. It catalyses the reaction guanosine(1207) in 16S rRNA + S-adenosyl-L-methionine = N(2)-methylguanosine(1207) in 16S rRNA + S-adenosyl-L-homocysteine + H(+). Specifically methylates the guanine in position 1207 of 16S rRNA in the 30S particle. The protein is Ribosomal RNA small subunit methyltransferase C of Buchnera aphidicola subsp. Acyrthosiphon pisum (strain APS) (Acyrthosiphon pisum symbiotic bacterium).